The sequence spans 116 residues: MYNIIIIVLSILAVTAALVFAAHFLPSRKLDLENGSPYECGFDPLNSARVPFSFRFFLVAILFLLFDLEIALLFPFPQALFIFNSSHVLYIATLFLAILLIGLIFEWTQGGLDWAE.

The next 3 helical transmembrane spans lie at 4–24, 56–76, and 88–108; these read IIIIVLSILAVTAALVFAAHF, FFLVAILFLLFDLEIALLFPF, and VLYIATLFLAILLIGLIFEWT.

This sequence belongs to the complex I subunit 3 family.

It localises to the mitochondrion membrane. The catalysed reaction is a ubiquinone + NADH + 5 H(+)(in) = a ubiquinol + NAD(+) + 4 H(+)(out). Functionally, core subunit of the mitochondrial membrane respiratory chain NADH dehydrogenase (Complex I) that is believed to belong to the minimal assembly required for catalysis. Complex I functions in the transfer of electrons from NADH to the respiratory chain. The immediate electron acceptor for the enzyme is believed to be ubiquinone. This is NADH-ubiquinone oxidoreductase chain 3 (ND3) from Pisaster ochraceus (Ochre sea star).